Reading from the N-terminus, the 92-residue chain is RNA-binding protein Hfq (92 aa).

A Sm domain is found at D10–I71. The tract at residues Y73 to G92 is disordered. The segment covering A75 to G92 has biased composition (low complexity).

This sequence belongs to the Hfq family. Homohexamer.

RNA chaperone that binds small regulatory RNA (sRNAs) and mRNAs to facilitate mRNA translational regulation in response to envelope stress, environmental stress and changes in metabolite concentrations. Also binds with high specificity to tRNAs. This Caldicellulosiruptor bescii (strain ATCC BAA-1888 / DSM 6725 / KCTC 15123 / Z-1320) (Anaerocellum thermophilum) protein is RNA-binding protein Hfq.